We begin with the raw amino-acid sequence, 101 residues long: Small ribosomal subunit protein uS14 (101 aa).

Belongs to the universal ribosomal protein uS14 family. As to quaternary structure, part of the 30S ribosomal subunit. Contacts proteins S3 and S10.

Functionally, binds 16S rRNA, required for the assembly of 30S particles and may also be responsible for determining the conformation of the 16S rRNA at the A site. The sequence is that of Small ribosomal subunit protein uS14 from Salmonella paratyphi A (strain ATCC 9150 / SARB42).